The following is a 540-amino-acid chain: Protein dml-1 (540 aa).

The interval 517 to 540 is disordered; that stretch reads NELAEMADEYHEGWSSGSDDGDDD.

This sequence belongs to the misato family.

The protein localises to the mitochondrion. In terms of biological role, involved in the partitioning of the mitochondrial organelle and mitochondrial DNA (mtDNA) inheritance. This Neurospora crassa (strain ATCC 24698 / 74-OR23-1A / CBS 708.71 / DSM 1257 / FGSC 987) protein is Protein dml-1 (dml-1).